The chain runs to 727 residues: E3 ubiquitin-protein ligase LRSAM1 (727 aa).

LRR repeat units follow at residues 30-51 (ADDI…AFAT), 56-77 (QKKV…SCSL), 82-103 (TIKV…MGQL), 105-126 (VLQV…IGNL), 128-150 (QLQT…GELR), and 151-172 (SLRT…LAHV). Residues 227 to 248 (GAENTQDSPDGPASRFSREEAE) form a disordered region. Position 234 is a phosphoserine (Ser-234). Coiled-coil stretches lie at residues 241–382 (RFSR…NLRQ) and 469–547 (RQIR…QENY). The 64-residue stretch at 569 to 632 (GMERRLVALL…LRRAQDLLAV (64 aa)) folds into the SAM domain. Phosphoserine is present on Ser-604. 2 consecutive short sequence motifs (PTAP motif) follow at residues 653-656 (PTAP) and 665-668 (PSAP). The RING-type zinc finger occupies 679 to 714 (CVVCLEREAQMVFLTCGHVCCCQQCCQPLRTCPLCR).

As to quaternary structure, interacts with TSG101. Interacts with PHF23. Interacts with FUS. Post-translationally, ubiquitination promoted by PHF23 leads to proteasomal degradation. As to expression, widely expressed.

Its subcellular location is the cytoplasm. The catalysed reaction is S-ubiquitinyl-[E2 ubiquitin-conjugating enzyme]-L-cysteine + [acceptor protein]-L-lysine = [E2 ubiquitin-conjugating enzyme]-L-cysteine + N(6)-ubiquitinyl-[acceptor protein]-L-lysine.. It functions in the pathway protein modification; protein ubiquitination. Its function is as follows. E3 ubiquitin-protein ligase that mediates monoubiquitination of TSG101 at multiple sites, leading to inactivate the ability of TSG101 to sort endocytic (EGF receptors) and exocytic (viral proteins) cargos. Bacterial recognition protein that defends the cytoplasm from invasive pathogens. Localizes to several intracellular bacterial pathogens and generates the bacteria-associated ubiquitin signal leading to autophagy-mediated intracellular bacteria degradation (xenophagy). The protein is E3 ubiquitin-protein ligase LRSAM1 of Mus musculus (Mouse).